A 218-amino-acid polypeptide reads, in one-letter code: Glutathione S-transferase Mu 1 (218 aa).

The region spanning proline 2 to glycine 88 is the GST N-terminal domain. Residues tyrosine 7 to tryptophan 8, arginine 43 to tryptophan 46, lysine 50, asparagine 59 to leucine 60, and glutamine 72 to serine 73 contribute to the glutathione site. Residues threonine 90–leucine 208 enclose the GST C-terminal domain. Position 116 (tyrosine 116) interacts with substrate.

This sequence belongs to the GST superfamily. Mu family. In terms of assembly, homodimer.

It is found in the cytoplasm. It carries out the reaction RX + glutathione = an S-substituted glutathione + a halide anion + H(+). The enzyme catalyses prostaglandin A2 + glutathione = prostaglandin A2-S-(R)-glutathione. The catalysed reaction is prostaglandin J2 + glutathione = prostaglandin J2-S-(R)-glutathione. It catalyses the reaction prostaglandin J2 + glutathione = prostaglandin J2-S-(S)-glutathione. It carries out the reaction prostaglandin A2 + glutathione = prostaglandin A2-S-(S)-glutathione. The enzyme catalyses 11(S)-hydroxy-14(S),15(S)-epoxy-(5Z,8Z,12E)-eicosatrienoate + glutathione = (11S,15S)-dihydroxy-14(R)-S-glutathionyl-(5Z,8Z,12E)-eicosatrienoate. Its function is as follows. Conjugation of reduced glutathione to a wide number of exogenous and endogenous hydrophobic electrophiles. Protects against the thiol-mediated metal-catalyzed oxidative inactivation of enzymes. Involved in the formation of glutathione conjugates of both prostaglandin A2 (PGA2) and prostaglandin J2 (PGJ2). Participates in the formation of novel hepoxilin regioisomers. In Bos taurus (Bovine), this protein is Glutathione S-transferase Mu 1 (GSTM1).